A 197-amino-acid chain; its full sequence is Imidazoleglycerol-phosphate dehydratase (197 aa).

Belongs to the imidazoleglycerol-phosphate dehydratase family.

The protein localises to the cytoplasm. It catalyses the reaction D-erythro-1-(imidazol-4-yl)glycerol 3-phosphate = 3-(imidazol-4-yl)-2-oxopropyl phosphate + H2O. It participates in amino-acid biosynthesis; L-histidine biosynthesis; L-histidine from 5-phospho-alpha-D-ribose 1-diphosphate: step 6/9. In Rhodopseudomonas palustris (strain ATCC BAA-98 / CGA009), this protein is Imidazoleglycerol-phosphate dehydratase.